The primary structure comprises 292 residues: tRNA (adenine(9)-N1)-methyltransferase (292 aa).

One can recognise an SAM-dependent MTase TRM10-type domain in the interval 72 to 253 (TFRKGGKKVS…ISLQSKSDKI (182 aa)).

The protein belongs to the class IV-like SAM-binding methyltransferase superfamily. TRM10 family.

The protein resides in the cytoplasm. It carries out the reaction adenosine(9) in tRNA + S-adenosyl-L-methionine = N(1)-methyladenosine(9) in tRNA + S-adenosyl-L-homocysteine + H(+). Its function is as follows. Catalyzes the S-adenosyl-L-methionine-dependent formation of N(1)-methyladenine at position 9 (m1A9) in tRNA. The chain is tRNA (adenine(9)-N1)-methyltransferase from Sulfolobus acidocaldarius (strain ATCC 33909 / DSM 639 / JCM 8929 / NBRC 15157 / NCIMB 11770).